The following is a 248-amino-acid chain: 3-deoxy-manno-octulosonate cytidylyltransferase (248 aa).

The protein belongs to the KdsB family.

It is found in the cytoplasm. The catalysed reaction is 3-deoxy-alpha-D-manno-oct-2-ulosonate + CTP = CMP-3-deoxy-beta-D-manno-octulosonate + diphosphate. Its pathway is nucleotide-sugar biosynthesis; CMP-3-deoxy-D-manno-octulosonate biosynthesis; CMP-3-deoxy-D-manno-octulosonate from 3-deoxy-D-manno-octulosonate and CTP: step 1/1. It functions in the pathway bacterial outer membrane biogenesis; lipopolysaccharide biosynthesis. Its function is as follows. Activates KDO (a required 8-carbon sugar) for incorporation into bacterial lipopolysaccharide in Gram-negative bacteria. This chain is 3-deoxy-manno-octulosonate cytidylyltransferase, found in Shigella flexneri.